Consider the following 2197-residue polypeptide: uncharacterized protein (2197 aa).

Ser2 is modified (N-acetylserine). Residues 2159–2195 (TIPFLAELLEDVELSVKSLAQDIIKQMEEMSGESLAE) form an HEAT repeat.

This sequence belongs to the HEATR1/UTP10 family.

The protein localises to the nucleus. The protein resides in the nucleolus. In terms of biological role, involved in nucleolar processing of pre-18S ribosomal RNA. Involved in ribosome biosynthesis. This is an uncharacterized protein from Arabidopsis thaliana (Mouse-ear cress).